Here is a 276-residue protein sequence, read N- to C-terminus: Hydroxyethylthiazole kinase (276 aa).

R126 and S172 together coordinate ATP. G199 lines the substrate pocket.

Belongs to the Thz kinase family. Requires Mg(2+) as cofactor.

The enzyme catalyses 5-(2-hydroxyethyl)-4-methylthiazole + ATP = 4-methyl-5-(2-phosphooxyethyl)-thiazole + ADP + H(+). It functions in the pathway cofactor biosynthesis; thiamine diphosphate biosynthesis; 4-methyl-5-(2-phosphoethyl)-thiazole from 5-(2-hydroxyethyl)-4-methylthiazole: step 1/1. Functionally, catalyzes the phosphorylation of the hydroxyl group of 4-methyl-5-beta-hydroxyethylthiazole (THZ). This Burkholderia pseudomallei (strain 1106a) protein is Hydroxyethylthiazole kinase.